We begin with the raw amino-acid sequence, 535 residues long: uncharacterized protein (535 aa).

2 consecutive transmembrane segments (helical) span residues 7–27 (DFDV…AYLA) and 509–529 (GGAV…ACLA).

Its subcellular location is the cell membrane. This is an uncharacterized protein from Mycobacterium bovis (strain ATCC BAA-935 / AF2122/97).